A 252-amino-acid polypeptide reads, in one-letter code: 5-oxoprolinase subunit A (252 aa).

The protein belongs to the LamB/PxpA family. In terms of assembly, forms a complex composed of PxpA, PxpB and PxpC.

It carries out the reaction 5-oxo-L-proline + ATP + 2 H2O = L-glutamate + ADP + phosphate + H(+). In terms of biological role, catalyzes the cleavage of 5-oxoproline to form L-glutamate coupled to the hydrolysis of ATP to ADP and inorganic phosphate. The protein is 5-oxoprolinase subunit A of Corynebacterium glutamicum (strain R).